A 911-amino-acid polypeptide reads, in one-letter code: Protein SOSEKI (911 aa).

Residues 15 to 107 form a DIX-like oligomerization domain region; that stretch reads TKVQVVYYLS…LVLKGSELYT (93 aa). 2 disordered regions span residues 219–470 and 492–810; these read SETL…TQCE and LCGN…PPRI. Basic and acidic residues-rich tracts occupy residues 253-286 and 295-407; these read TDRE…EVSR and EAPR…EELP. A compositionally biased stretch (polar residues) spans 414–423; sequence SPTCSESGDS. Residues 452-467 are compositionally biased toward low complexity; sequence SSSTRSSTPSTSAAST. The Association to cell membranes motif lies at 493–494; sequence CG. The segment covering 511-527 has biased composition (low complexity); the sequence is PLAAAAQPASGAVPQSP. A compositionally biased stretch (polar residues) spans 591–607; that stretch reads SGVNSAMATPFLQTENN. Positions 608-662 are enriched in low complexity; the sequence is SPSSSESSSAAVSSGKKPASISLSGTSDASDGGNGASSTASSSSEVQNNVSVKEV. Residues 663–683 are compositionally biased toward polar residues; it reads ITQQLPSPSSSEGRPSLNIDT. Positions 696 to 709 are enriched in basic and acidic residues; it reads SDVRETVKTTRPDS. Polar residues predominate over residues 722 to 733; it reads PVRTQLSSSPSF. A compositionally biased stretch (basic and acidic residues) spans 735–771; the sequence is KRIEDARARARSLVSKEIRSGESRSSKDLLKENDRVK. A compositionally biased stretch (low complexity) spans 772-784; the sequence is TSSGSMRSGSTRT. Positions 785–805 are enriched in polar residues; it reads PNNKNGTTGAGSKTLSGTFNR. A C2HC/C3H-type zinc finger spans residues 864–893; it reads ILQECGQCGRTFKPDSLKVHMRGCHALRRS. Zn(2+) is bound by residues Cys868, Cys871, His883, and Cys887.

Belongs to the SOSEKI family. As to quaternary structure, homodimer. Forms long polymer filaments with other SOKs proteins polymers crucial for polar localization and biological activity. Zn(2+) serves as cofactor.

The protein resides in the cell membrane. In terms of biological role, SOSEKI proteins locally interpret global polarity cues and can influence cell division orientation to coordinate cell polarization relative to body axes. The sequence is that of Protein SOSEKI from Marchantia polymorpha (Common liverwort).